Consider the following 168-residue polypeptide: Transcription antitermination protein NusB (168 aa).

Belongs to the NusB family.

Its function is as follows. Involved in transcription antitermination. Required for transcription of ribosomal RNA (rRNA) genes. Binds specifically to the boxA antiterminator sequence of the ribosomal RNA (rrn) operons. The protein is Transcription antitermination protein NusB of Bradyrhizobium sp. (strain ORS 278).